The following is a 66-amino-acid chain: LKCVNLQANGVKMTQECAKEDTKCLTLRSLKKTLKFCASDRICKTMKIASLPGEQITCCEGNMCNA.

Disulfide bonds link Cys3–Cys24, Cys17–Cys37, Cys43–Cys58, and Cys59–Cys64.

As to expression, expressed by the skin dorsal glands.

The protein resides in the secreted. Functionally, lacks alpha-neurotoxic activity, has apparently no antibacterial activity, nor anti-coagulant potency. The polypeptide is Xenoxin-3 (Xenopus laevis (African clawed frog)).